The chain runs to 129 residues: RxLR effector protein SFI6 (129 aa).

The signal sequence occupies residues 1–16 (MTLVVLATGLLASGTA). Positions 42 to 64 (RFLRSHQITDDKVEINEHGEEER) match the RxLR-dEER motif.

This sequence belongs to the RxLR effector family.

The protein resides in the secreted. Its subcellular location is the host cytoplasm. It is found in the host cell membrane. In terms of biological role, effector that suppresses flg22-induced post-translational MAP kinase activation in tomato but not in Arabidopsis. The perception of highly conserved pathogen- or microbe-associated molecular patterns (PAMPs/MAMPs), such as flg22, triggers converging signaling pathways recruiting MAP kinase cascades and inducing transcriptional re-programming, yielding a generic antimicrobial response. The polypeptide is RxLR effector protein SFI6 (Phytophthora infestans (strain T30-4) (Potato late blight agent)).